The primary structure comprises 329 residues: Fructose-1,6-bisphosphatase class 1 (329 aa).

Mg(2+) is bound by residues Glu-84, Asp-103, Leu-105, and Asp-106. Residues 106 to 109 (DGSS), Asn-196, and Lys-262 each bind substrate. Glu-268 lines the Mg(2+) pocket.

It belongs to the FBPase class 1 family. In terms of assembly, homotetramer. It depends on Mg(2+) as a cofactor.

It localises to the cytoplasm. It carries out the reaction beta-D-fructose 1,6-bisphosphate + H2O = beta-D-fructose 6-phosphate + phosphate. It participates in carbohydrate biosynthesis; gluconeogenesis. The chain is Fructose-1,6-bisphosphatase class 1 from Shewanella pealeana (strain ATCC 700345 / ANG-SQ1).